The primary structure comprises 914 residues: Golgin candidate 6 (914 aa).

Coiled-coil stretches lie at residues 723–837 (IEKQ…SLKG) and 863–901 (EDEL…LEDI). Position 911 is a phosphoserine (S911).

Its subcellular location is the golgi apparatus. The protein resides in the golgi stack. Its function is as follows. Golgi matrix protein playing a role in tethering of vesicles to Golgi membranes and in maintaining the overall structure of the Golgi apparatus. Functions in the anterograde transport of storage protein precursors from the endoplasmic reticulum (ER) to the Golgi complex. The chain is Golgin candidate 6 (GC6) from Arabidopsis thaliana (Mouse-ear cress).